Reading from the N-terminus, the 357-residue chain is Isopentenyl-diphosphate delta-isomerase (357 aa).

Residue Arg6–Lys7 participates in substrate binding. FMN is bound by residues Ser62, Ala63 to Thr65, Ser93, and Asn122. Position 93 to 95 (Ser93 to Arg95) interacts with substrate. Gln156 contacts substrate. Glu157 provides a ligand contact to Mg(2+). FMN contacts are provided by residues Lys186, Thr216, Gly267–Arg269, and Ala288–Leu289.

Belongs to the IPP isomerase type 2 family. In terms of assembly, homooctamer. Dimer of tetramers. It depends on FMN as a cofactor. The cofactor is NADPH. Mg(2+) is required as a cofactor.

Its subcellular location is the cytoplasm. The catalysed reaction is isopentenyl diphosphate = dimethylallyl diphosphate. Involved in the biosynthesis of isoprenoids. Catalyzes the 1,3-allylic rearrangement of the homoallylic substrate isopentenyl (IPP) to its allylic isomer, dimethylallyl diphosphate (DMAPP). This is Isopentenyl-diphosphate delta-isomerase from Methanothrix thermoacetophila (strain DSM 6194 / JCM 14653 / NBRC 101360 / PT) (Methanosaeta thermophila).